The following is a 417-amino-acid chain: Phosphoglycerate kinase 1 (417 aa).

Position 2 is an N-acetylserine (S2). A phosphoserine mark is found at S2 and S4. K6 is subject to N6-succinyllysine. An N6-acetyllysine modification is found at K11. (2R)-3-phosphoglycerate is bound by residues V23, D24, F25, N26, Q38, and R39. The tract at residues 38–43 (QRIKAA) is mitochondrial targeting region exposed following cis-trans isomerization by PIN1 and recognized by the TOM complex for mitochondrial translocation of the protein. K48 carries the post-translational modification N6-acetyllysine; alternate. Residue K48 is modified to N6-succinyllysine; alternate. Positions 62, 63, 65, and 66 each coordinate (2R)-3-phosphoglycerate. K75 carries the post-translational modification N6-acetyllysine. Y76 is modified (phosphotyrosine). K86 and K91 each carry N6-acetyllysine. K97 is subject to N6-acetyllysine; alternate. An N6-(2-hydroxyisobutyryl)lysine; alternate modification is found at K97. Residues L122 and R123 each coordinate (2R)-3-phosphoglycerate. K131 carries the N6-acetyllysine; alternate modification. N6-malonyllysine; alternate is present on K131. Position 146 is an N6-acetyllysine (K146). Positions 170 and 171 each coordinate (2R)-3-phosphoglycerate. K191 is subject to N6-succinyllysine. Y196 bears the Phosphotyrosine mark. At K199 the chain carries N6-acetyllysine. S203 bears the Phosphoserine mark. Position 214 (G214) interacts with ADP. G214 contacts CDP. AMP is bound by residues A215 and K216. An ATP-binding site is contributed by A215. A215 serves as a coordination point for Mg(2+). K216 is modified (N6-(2-hydroxyisobutyryl)lysine). Mg(2+) is bound by residues A218 and D219. D219 contacts CDP. K220 lines the AMP pocket. Residue K220 coordinates ATP. The residue at position 220 (K220) is an N6-(2-hydroxyisobutyryl)lysine. Residue G238 participates in ADP binding. G238 provides a ligand contact to CDP. An AMP-binding site is contributed by G239. G239 provides a ligand contact to ATP. K267 and K291 each carry N6-acetyllysine. Residue G313 participates in AMP binding. G313 contributes to the ATP binding site. K323 bears the N6-(2-hydroxyisobutyryl)lysine mark. The CDP site is built by G338, V340, and F343. F343 contacts ADP. E344 provides a ligand contact to AMP. Position 344 (E344) interacts with ATP. Position 361 is an N6-acetyllysine (K361). Residues D375 and T376 each coordinate ATP. D375 lines the Mg(2+) pocket.

This sequence belongs to the phosphoglycerate kinase family. Monomer. Interacts with kinase MAPK1/ERK2; the interaction is direct, occurs under hypoxic conditions, and promotes its interaction with PIN1. Interacts with peptidyl-prolyl cis-trans isomerase PIN1; the interaction is direct, occurs under hypoxic conditions, and targets the protein to the mitochondrion by promoting interactions with the TOM complex. Interacts with mitochondrial circRNA mcPGK1 (via its 2nd stem-loop); the interaction is direct and targets the protein to the mitochondrion by promoting interactions with the TOM complex. Interacts with pyruvate dehydrogenase kinase PDK1; the interaction is direct, occurs under hypoxic conditions and leads to PDK1-mediated inhibition of pyruvate dehydrogenase complex activity. Requires Mg(2+) as cofactor. In terms of processing, phosphorylated at Ser-203 by MAPK1/ERK2 under hypoxic conditions, which promotes its mitochondrial targeting.

It localises to the cytoplasm. The protein localises to the cytosol. The protein resides in the mitochondrion matrix. It carries out the reaction (2R)-3-phosphoglycerate + ATP = (2R)-3-phospho-glyceroyl phosphate + ADP. It catalyses the reaction L-seryl-[protein] + ATP = O-phospho-L-seryl-[protein] + ADP + H(+). Its pathway is carbohydrate degradation; glycolysis; pyruvate from D-glyceraldehyde 3-phosphate: step 2/5. Catalyzes one of the two ATP producing reactions in the glycolytic pathway via the reversible conversion of 1,3-diphosphoglycerate to 3-phosphoglycerate. Both L- and D- forms of purine and pyrimidine nucleotides can be used as substrates, but the activity is much lower on pyrimidines. In addition to its role as a glycolytic enzyme, it seems that PGK-1 acts as a polymerase alpha cofactor protein (primer recognition protein). Acts as a protein kinase when localized to the mitochondrion where it phosphorylates pyruvate dehydrogenase kinase PDK1 to inhibit pyruvate dehydrogenase complex activity and suppress the formation of acetyl-coenzyme A from pyruvate, and consequently inhibit oxidative phosphorylation and promote glycolysis. May play a role in sperm motility. The sequence is that of Phosphoglycerate kinase 1 (PGK1) from Cricetulus griseus (Chinese hamster).